Reading from the N-terminus, the 162-residue chain is MSSSQVVRDSAKKLVNLLEKYPKDRIHHLVSFRDVQIARFRRVAGLPNVDDKGKSIKEKKPSLDEIKSIINRTSGPLGLNKEMLTKIQNKMVDEKFTEESINEQIRALSTIMNNKFRNYYDIGDKLYKPAGNPQYYQRLINAVDGKKKESLFTAMRTVLFGK.

Ser-2 bears the N-acetylserine mark. Thr-97 is subject to Phosphothreonine.

Its subcellular location is the mitochondrion. This protein is involved in processing of the 5' terminus and the intervening sequences of cytochrome b pre-mRNA. The sequence is that of Cytochrome B pre-mRNA-processing protein 6 (CBP6) from Saccharomyces cerevisiae (strain ATCC 204508 / S288c) (Baker's yeast).